The chain runs to 324 residues: MSLYMLVSTFAVAFIITVIGVPLFIPFLVKLKFGQSIRDEGPKMHEKKSGTPTMGAVIFITAMLISFLIFSFISGEVSAATWLLFITLALFGALGFLDDYIKVVQKRNLGLTSKQKFLGQVAISILFYLVYHFSDFAETLKIPFTNTEIDLGWFFIIFILFWLVGFSNAVNLTDGLDGLVSGLSVIAFSAFGVIAFYQEQMDVAIFCFAIVGGMLGFLLFNKNPAKIFMGDTGSLALGGSIAAVSILVHQEWLLLLIGIIFVIETASVILQVFYFKATGGKRIFRMTPIHHHFELGGWSEWRVVLTFWGIGLIGAIISVCVVIF.

A run of 10 helical transmembrane segments spans residues 9 to 29, 53 to 73, 77 to 97, 117 to 137, 149 to 169, 176 to 196, 201 to 221, 227 to 247, 253 to 273, and 304 to 324; these read TFAV…PFLV, TMGA…FSFI, VSAA…LGFL, FLGQ…SDFA, IDLG…FSNA, LDGL…VIAF, MDVA…LLFN, IFMG…VSIL, LLLL…LQVF, and VLTF…VVIF.

The protein belongs to the glycosyltransferase 4 family. MraY subfamily. Mg(2+) serves as cofactor.

It is found in the cell membrane. The enzyme catalyses UDP-N-acetyl-alpha-D-muramoyl-L-alanyl-gamma-D-glutamyl-meso-2,6-diaminopimeloyl-D-alanyl-D-alanine + di-trans,octa-cis-undecaprenyl phosphate = di-trans,octa-cis-undecaprenyl diphospho-N-acetyl-alpha-D-muramoyl-L-alanyl-D-glutamyl-meso-2,6-diaminopimeloyl-D-alanyl-D-alanine + UMP. It functions in the pathway cell wall biogenesis; peptidoglycan biosynthesis. Catalyzes the initial step of the lipid cycle reactions in the biosynthesis of the cell wall peptidoglycan: transfers peptidoglycan precursor phospho-MurNAc-pentapeptide from UDP-MurNAc-pentapeptide onto the lipid carrier undecaprenyl phosphate, yielding undecaprenyl-pyrophosphoryl-MurNAc-pentapeptide, known as lipid I. The protein is Phospho-N-acetylmuramoyl-pentapeptide-transferase of Listeria innocua serovar 6a (strain ATCC BAA-680 / CLIP 11262).